The sequence spans 410 residues: Arginine deiminase (410 aa).

Residue cysteine 399 is the Amidino-cysteine intermediate of the active site.

This sequence belongs to the arginine deiminase family.

It localises to the cytoplasm. It carries out the reaction L-arginine + H2O = L-citrulline + NH4(+). It participates in amino-acid degradation; L-arginine degradation via ADI pathway; carbamoyl phosphate from L-arginine: step 1/2. This chain is Arginine deiminase, found in Listeria monocytogenes serotype 4b (strain F2365).